A 159-amino-acid polypeptide reads, in one-letter code: Putative pre-16S rRNA nuclease (159 aa).

The protein belongs to the YqgF nuclease family.

Its subcellular location is the cytoplasm. Its function is as follows. Could be a nuclease involved in processing of the 5'-end of pre-16S rRNA. This chain is Putative pre-16S rRNA nuclease, found in Bartonella henselae (strain ATCC 49882 / DSM 28221 / CCUG 30454 / Houston 1) (Rochalimaea henselae).